The sequence spans 916 residues: DNA ligase 1 (916 aa).

Residues 1-10 show a composition bias toward polar residues; sequence MQRSIMSFFQ. The segment at 1-197 is disordered; that stretch reads MQRSIMSFFQ…SPESVTLTKT (197 aa). Residues 13–43 show a composition bias toward basic and acidic residues; it reads KEGKAKKPEKETPSSIREKEPPPKVALKERN. Serine 49, serine 51, and serine 65 each carry phosphoserine. Phosphothreonine is present on threonine 77. Over residues 99–111 the composition is skewed to polar residues; sequence PENSPVFNCSSPM. Residues 119–129 show a composition bias toward basic residues; sequence PKRRTARKQLP. Lysine 144 carries the N6-acetyllysine modification. Basic and acidic residues predominate over residues 153–177; the sequence is KEEETPKESLAEAEDIKQKEEKEGD. A compositionally biased stretch (polar residues) spans 185-197; the sequence is PTKSPESVTLTKT. Position 193 is a phosphothreonine (threonine 193). The residue at position 225 (lysine 225) is an N6-acetyllysine. Phosphoserine is present on residues serine 228 and serine 229. At threonine 232 the chain carries Phosphothreonine. Positions 236–266 are disordered; the sequence is PAVKTEVKQEESGTLRKEETKGTLDPANYNP. The segment covering 238 to 257 has biased composition (basic and acidic residues); that stretch reads VKTEVKQEESGTLRKEETKG. Residues 447 to 456 form an interaction with target DNA region; it reads RLRLGLAEQS. Glutamate 564 contacts ATP. Lysine 566 serves as the catalytic N6-AMP-lysine intermediate. ATP is bound by residues arginine 571 and glutamate 619. A Mg(2+)-binding site is contributed by glutamate 619. The segment at 640 to 642 is interaction with target DNA; that stretch reads KRK. Glutamate 718 contacts Mg(2+). ATP-binding residues include lysine 723 and lysine 742. Position 796 is a phosphothreonine (threonine 796). Phosphoserine occurs at positions 799, 906, 907, and 911. The tract at residues 879 to 916 is disordered; sequence DKQPEQATTSNQVASLYRKQSQIQNQQSSDLDSDVEDY. Residues 883 to 908 are compositionally biased toward polar residues; it reads EQATTSNQVASLYRKQSQIQNQQSSD.

It belongs to the ATP-dependent DNA ligase family. Interacts with PCNA. Interacts with POLB. It depends on Mg(2+) as a cofactor.

It is found in the nucleus. The catalysed reaction is ATP + (deoxyribonucleotide)n-3'-hydroxyl + 5'-phospho-(deoxyribonucleotide)m = (deoxyribonucleotide)n+m + AMP + diphosphate.. DNA ligase that seals nicks in double-stranded during DNA repair. Also involved in DNA replication and DNA recombination. This chain is DNA ligase 1 (Lig1), found in Mus musculus (Mouse).